Reading from the N-terminus, the 200-residue chain is Dephospho-CoA kinase (200 aa).

Residues 3–200 (RIGLTGGIGS…LIAEILTRIK (198 aa)) form the DPCK domain. Position 11–16 (11–16 (GSGKST)) interacts with ATP.

This sequence belongs to the CoaE family.

The protein resides in the cytoplasm. The enzyme catalyses 3'-dephospho-CoA + ATP = ADP + CoA + H(+). Its pathway is cofactor biosynthesis; coenzyme A biosynthesis; CoA from (R)-pantothenate: step 5/5. Its function is as follows. Catalyzes the phosphorylation of the 3'-hydroxyl group of dephosphocoenzyme A to form coenzyme A. This Corynebacterium efficiens (strain DSM 44549 / YS-314 / AJ 12310 / JCM 11189 / NBRC 100395) protein is Dephospho-CoA kinase.